A 268-amino-acid chain; its full sequence is MGSPRSALSCLLLHLLVLCLQAQVRSAAQKRGPGAGNPADTLGQGHEDRPFGQRSRAGKNFTNPAPNYPEEGSKEQRDSVLPKVTQRHVREQSLVTDQLSRRLIRTYQLYSRTSGKHVQVLANKRINAMAEDGDPFAKLIVETDTFGSRVRVRGAETGLYICMNKKGKLIAKSNGKGKDCVFTEIVLENNYTALQNAKYEGWYMAFTRKGRPRKGSKTRQHQREVHFMKRLPRGHHTTEQSLRFEFLNYPPFTRSLRGSQRTWAPEPR.

An N-terminal signal peptide occupies residues Met1–Ala22. At Gln23 the chain carries Pyrrolidone carboxylic acid. Residues Gln29–Arg87 form a disordered region. Asn60 carries N-linked (GlcNAc...) asparagine glycosylation. Positions Glu71–Val80 are enriched in basic and acidic residues. An N-linked (GlcNAc...) asparagine glycan is attached at Asn190.

The protein belongs to the heparin-binding growth factors family. Monomer. Homodimer. Interacts with FGFR1, FGFR2, FGFR3 and FGFR4. Affinity between fibroblast growth factors (FGFs) and their receptors is increased by heparan sulfate glycosaminoglycans that function as coreceptors. In terms of processing, the N-terminus is blocked. In terms of tissue distribution, absent in normal mammary glands and detected only in adult testis and ovary and in midgestational embryos.

It localises to the secreted. In terms of biological role, plays an important role in the regulation of embryonic development, cell proliferation, cell differentiation and cell migration. Required for normal brain, eye, ear and limb development during embryogenesis. Required for normal development of the gonadotropin-releasing hormone (GnRH) neuronal system. Plays a role in neurite outgrowth in hippocampal cells. Cooperates with Wnt-1 in mouse mammary tumor virus-induced murine mammary tumorigenesis. In Mus musculus (Mouse), this protein is Fibroblast growth factor 8 (Fgf8).